A 559-amino-acid polypeptide reads, in one-letter code: Myb/SANT-like DNA-binding domain-containing protein 2 (559 aa).

Positions 1 to 62 are disordered; that stretch reads MAAPCGSELP…GSAAGSGAAA (62 aa). Residues Ser13, Ser24, Ser27, Ser32, and Ser48 each carry the phosphoserine modification. The span at 46-61 shows a compositional bias: low complexity; it reads GASPLGPGSAAGSGAA. Positions 103–173 constitute a Myb-like domain; that stretch reads SWTPAETNAL…QCRERIKTLR (71 aa). Residues Lys268 and Lys343 each participate in a glycyl lysine isopeptide (Lys-Gly) (interchain with G-Cter in SUMO2) cross-link. Position 436 is a phosphoserine (Ser436).

The sequence is that of Myb/SANT-like DNA-binding domain-containing protein 2 (Msantd2) from Mus musculus (Mouse).